The sequence spans 907 residues: Protein translocase subunit SecA (907 aa).

ATP-binding positions include Q87, 105–109, and D512; that span reads GEGKT. 4 residues coordinate Zn(2+): C891, C893, C902, and H903.

Belongs to the SecA family. Monomer and homodimer. Part of the essential Sec protein translocation apparatus which comprises SecA, SecYEG and auxiliary proteins SecDF-YajC and YidC. Requires Zn(2+) as cofactor.

The protein resides in the cell inner membrane. It is found in the cytoplasm. It catalyses the reaction ATP + H2O + cellular proteinSide 1 = ADP + phosphate + cellular proteinSide 2.. Its function is as follows. Part of the Sec protein translocase complex. Interacts with the SecYEG preprotein conducting channel. Has a central role in coupling the hydrolysis of ATP to the transfer of proteins into and across the cell membrane, serving both as a receptor for the preprotein-SecB complex and as an ATP-driven molecular motor driving the stepwise translocation of polypeptide chains across the membrane. In Tolumonas auensis (strain DSM 9187 / NBRC 110442 / TA 4), this protein is Protein translocase subunit SecA.